We begin with the raw amino-acid sequence, 102 residues long: Pole-localizer protein TmaR (102 aa).

Residues 7-34 (IINQARRKNKLKRELQDNQKKIRDNQKR) adopt a coiled-coil conformation.

This sequence belongs to the pole-localizer TmaR family.

The protein localises to the cytoplasm. Pole-localizer protein involved in the regulation of several cellular processes. This is Pole-localizer protein TmaR from Aliivibrio salmonicida (strain LFI1238) (Vibrio salmonicida (strain LFI1238)).